We begin with the raw amino-acid sequence, 188 residues long: GTP cyclohydrolase 1 (188 aa).

C78, H81, and C150 together coordinate Zn(2+).

It belongs to the GTP cyclohydrolase I family. As to quaternary structure, homomer.

It carries out the reaction GTP + H2O = 7,8-dihydroneopterin 3'-triphosphate + formate + H(+). It functions in the pathway cofactor biosynthesis; 7,8-dihydroneopterin triphosphate biosynthesis; 7,8-dihydroneopterin triphosphate from GTP: step 1/1. The sequence is that of GTP cyclohydrolase 1 from Geobacillus sp. (strain WCH70).